Here is a 329-residue protein sequence, read N- to C-terminus: Phosphoenolpyruvate transferase (329 aa).

Aspartate 61 serves as a coordination point for 7,8-didemethyl-8-hydroxy-5-deazariboflavin.

Belongs to the CofD family. Homodimer. The cofactor is Mg(2+).

The catalysed reaction is enolpyruvoyl-2-diphospho-5'-guanosine + 7,8-didemethyl-8-hydroxy-5-deazariboflavin = dehydro coenzyme F420-0 + GMP + H(+). The protein operates within cofactor biosynthesis; coenzyme F420 biosynthesis. Its function is as follows. Catalyzes the transfer of the phosphoenolpyruvate moiety from enoylpyruvoyl-2-diphospho-5'-guanosine (EPPG) to 7,8-didemethyl-8-hydroxy-5-deazariboflavin (FO) with the formation of dehydro coenzyme F420-0 and GMP. The sequence is that of Phosphoenolpyruvate transferase from Mycobacterium marinum (strain ATCC BAA-535 / M).